The following is a 246-amino-acid chain: Ribosomal RNA large subunit methyltransferase E (246 aa).

Residues Gly81, Trp83, Asp104, Asp120, and Asp144 each coordinate S-adenosyl-L-methionine. Lys184 (proton acceptor) is an active-site residue.

The protein belongs to the class I-like SAM-binding methyltransferase superfamily. RNA methyltransferase RlmE family.

It localises to the cytoplasm. The catalysed reaction is uridine(2552) in 23S rRNA + S-adenosyl-L-methionine = 2'-O-methyluridine(2552) in 23S rRNA + S-adenosyl-L-homocysteine + H(+). In terms of biological role, specifically methylates the uridine in position 2552 of 23S rRNA at the 2'-O position of the ribose in the fully assembled 50S ribosomal subunit. This Agrobacterium fabrum (strain C58 / ATCC 33970) (Agrobacterium tumefaciens (strain C58)) protein is Ribosomal RNA large subunit methyltransferase E.